Here is an 865-residue protein sequence, read N- to C-terminus: Cadherin-related family member 1 (865 aa).

Positions 1–23 (MKHVRHFIPSLFLSLVHVCLVQA) are cleaved as a signal peptide. The Extracellular segment spans residues 24-705 (NYAPYFFDNG…TKDNPMKALG (682 aa)). Cadherin domains lie at 38 to 137 (NGNM…SPEF), 138 to 249 (INTP…PPMF), 250 to 356 (IGTP…PPTF), 362 to 475 (PQNR…VPKF), 476 to 579 (SSDY…SPEF), and 571 to 690 (DVND…GPMA). Residues 706-726 (VLAGVMGIMVLITIMISTAMF) traverse the membrane as a helical segment. Topologically, residues 727-865 (WRNKRSNKIM…RNASMGEPHI (139 aa)) are cytoplasmic. Residues 782–810 (ENSNNNVQAAPVPPAAPLPPPPPALAASG) are disordered. Pro residues predominate over residues 792-805 (PVPPAAPLPPPPPA).

The protein localises to the membrane. Functionally, potential calcium-dependent cell-adhesion protein. In Gallus gallus (Chicken), this protein is Cadherin-related family member 1 (CDHR1).